The primary structure comprises 242 residues: MAGHSKWANIKHKKAAADAKRGKIWTRLIKEIQVAARLGGGDANSNPRLRLAVDKAADANMPKDNVKRAIDRGVGGADGANYEEIRYEGYGISGAAIIVDTLTDNRIRTVAEVRHAFSKFGGNMGTDGSVAFMFDHVGQFLFAPGTSEDALMEAALEAGADDVSTNDDGSIEVLCDWQAFSAVKDALEAAGFKAELAEVTMKPQNEVEFTGDDAAKMQKLLDALENLDDVQEVYTNAVIVEE.

Belongs to the TACO1 family.

Its subcellular location is the cytoplasm. The polypeptide is Probable transcriptional regulatory protein Bamb_2332 (Burkholderia ambifaria (strain ATCC BAA-244 / DSM 16087 / CCUG 44356 / LMG 19182 / AMMD) (Burkholderia cepacia (strain AMMD))).